We begin with the raw amino-acid sequence, 902 residues long: Viral-enhancing factor (902 aa).

Residues 27–330 form the Peptidase M60 domain; it reads HRRTEVGVVL…IFAWLYNPQR (304 aa). N73, N265, N278, N339, N540, N593, N594, N620, N782, and N840 each carry an N-linked (GlcNAc...) asparagine; by host glycan.

In terms of biological role, involved in disruption of the peritrophic membrane and fusion of nucleocapsids with midgut cells. This chain is Viral-enhancing factor (VEF), found in Heliothis (HaGV).